The chain runs to 674 residues: Acetyl-coenzyme A synthetase (674 aa).

Residues 201–204 (RGGR) and T320 contribute to the CoA site. ATP-binding positions include 396–398 (GEP), 420–425 (DTYWQT), D518, and R533. Residue S541 participates in CoA binding. R544 contacts ATP. Residue R603 coordinates CoA.

This sequence belongs to the ATP-dependent AMP-binding enzyme family.

It carries out the reaction acetate + ATP + CoA = acetyl-CoA + AMP + diphosphate. The sequence is that of Acetyl-coenzyme A synthetase (acsA) from Dictyostelium discoideum (Social amoeba).